The sequence spans 91 residues: ATP synthase subunit c (91 aa).

2 helical membrane-spanning segments follow: residues 4-24 and 53-73; these read FTMC…GTGI and IGLA…LIIL.

Belongs to the ATPase C chain family. As to quaternary structure, F-type ATPases have 2 components, F(1) - the catalytic core - and F(0) - the membrane proton channel. F(1) has five subunits: alpha(3), beta(3), gamma(1), delta(1), epsilon(1). F(0) has three main subunits: a(1), b(2) and c(10-14). The alpha and beta chains form an alternating ring which encloses part of the gamma chain. F(1) is attached to F(0) by a central stalk formed by the gamma and epsilon chains, while a peripheral stalk is formed by the delta and b chains.

It is found in the cell inner membrane. Its function is as follows. F(1)F(0) ATP synthase produces ATP from ADP in the presence of a proton or sodium gradient. F-type ATPases consist of two structural domains, F(1) containing the extramembraneous catalytic core and F(0) containing the membrane proton channel, linked together by a central stalk and a peripheral stalk. During catalysis, ATP synthesis in the catalytic domain of F(1) is coupled via a rotary mechanism of the central stalk subunits to proton translocation. Key component of the F(0) channel; it plays a direct role in translocation across the membrane. A homomeric c-ring of between 10-14 subunits forms the central stalk rotor element with the F(1) delta and epsilon subunits. The polypeptide is ATP synthase subunit c (Geobacter sulfurreducens (strain ATCC 51573 / DSM 12127 / PCA)).